A 107-amino-acid polypeptide reads, in one-letter code: Thioredoxin (107 aa).

The Thioredoxin domain maps to 2–107; sequence VVHIENLNAF…TLKQKINDHK (106 aa). Residues Cys-32 and Cys-35 each act as nucleophile in the active site. A disulfide bridge connects residues Cys-32 and Cys-35. An S-nitrosocysteine mark is found at Cys-71 and Cys-75.

It belongs to the thioredoxin family. Post-translationally, may be nitrosylated on several cysteine residues, depending on the oxidation state. Nitrosylated Cys-75 may serve as donor for nitrosylation of target proteins.

It is found in the nucleus. The protein localises to the cytoplasm. It localises to the secreted. In terms of biological role, participates in various redox reactions through the reversible oxidation of its active center dithiol to a disulfide and catalyzes dithiol-disulfide exchange reactions. Plays a role in the reversible S-nitrosylation of cysteine residues in target proteins, and thereby contributes to the response to intracellular nitric oxide. Nitrosylates the active site Cys of CASP3 in response to nitric oxide (NO), and thereby inhibits caspase-3 activity. Induces the FOS/JUN AP-1 DNA binding activity in ionizing radiation (IR) cells through its oxidation/reduction status and stimulates AP-1 transcriptional activity. This is Thioredoxin (txn) from Ictalurus punctatus (Channel catfish).